The primary structure comprises 85 residues: MAISKKMLTTFVLTILLAVSFVHCSDRTSGVGINQEYAKCYDLADCQKPKVDDAACERFCGAKSFLLYGKCDTATNKCCCKSKTK.

The N-terminal stretch at 1–24 (MAISKKMLTTFVLTILLAVSFVHC) is a signal peptide. Cystine bridges form between Cys-40–Cys-80, Cys-46–Cys-71, Cys-56–Cys-78, and Cys-60–Cys-79.

It belongs to the DEFL family.

The protein resides in the secreted. The polypeptide is Defensin-like protein 112 (Arabidopsis thaliana (Mouse-ear cress)).